The primary structure comprises 964 residues: Isoleucine--tRNA ligase (964 aa).

The 'HIGH' region motif lies at 66 to 76; sequence PYANGDIHIGH. E596 is a binding site for L-isoleucyl-5'-AMP. The 'KMSKS' region signature appears at 637–641; sequence KMSKS. ATP is bound at residue K640. Zn(2+)-binding residues include C927, C930, C947, and C950.

It belongs to the class-I aminoacyl-tRNA synthetase family. IleS type 1 subfamily. In terms of assembly, monomer. Requires Zn(2+) as cofactor.

It is found in the cytoplasm. The catalysed reaction is tRNA(Ile) + L-isoleucine + ATP = L-isoleucyl-tRNA(Ile) + AMP + diphosphate. In terms of biological role, catalyzes the attachment of isoleucine to tRNA(Ile). As IleRS can inadvertently accommodate and process structurally similar amino acids such as valine, to avoid such errors it has two additional distinct tRNA(Ile)-dependent editing activities. One activity is designated as 'pretransfer' editing and involves the hydrolysis of activated Val-AMP. The other activity is designated 'posttransfer' editing and involves deacylation of mischarged Val-tRNA(Ile). The protein is Isoleucine--tRNA ligase of Cupriavidus necator (strain ATCC 17699 / DSM 428 / KCTC 22496 / NCIMB 10442 / H16 / Stanier 337) (Ralstonia eutropha).